Reading from the N-terminus, the 418-residue chain is Pentatricopeptide repeat-containing protein At2g18520, mitochondrial (418 aa).

The N-terminal 14 residues, 1-14 (MTSSRLYLRFLRRF), are a transit peptide targeting the mitochondrion. 8 PPR repeats span residues 101–135 (TETF…GTPR), 136–166 (TVVS…FPQR), 173–207 (DKIS…GVEV), 208–242 (TIIA…GCDL), 243–276 (DNTV…GLKP), 277–311 (DTVS…NAAT), 312–342 (FRTL…HKIP), and 343–373 (DFKT…VKKK).

The protein belongs to the PPR family. P subfamily.

It localises to the mitochondrion. This Arabidopsis thaliana (Mouse-ear cress) protein is Pentatricopeptide repeat-containing protein At2g18520, mitochondrial.